The chain runs to 257 residues: Thiazole synthase (257 aa).

Catalysis depends on Lys96, which acts as the Schiff-base intermediate with DXP. 1-deoxy-D-xylulose 5-phosphate-binding positions include Gly157, 184-185 (AG), and 206-207 (NT).

The protein belongs to the ThiG family. Homotetramer. Forms heterodimers with either ThiH or ThiS.

It localises to the cytoplasm. It carries out the reaction [ThiS sulfur-carrier protein]-C-terminal-Gly-aminoethanethioate + 2-iminoacetate + 1-deoxy-D-xylulose 5-phosphate = [ThiS sulfur-carrier protein]-C-terminal Gly-Gly + 2-[(2R,5Z)-2-carboxy-4-methylthiazol-5(2H)-ylidene]ethyl phosphate + 2 H2O + H(+). The protein operates within cofactor biosynthesis; thiamine diphosphate biosynthesis. In terms of biological role, catalyzes the rearrangement of 1-deoxy-D-xylulose 5-phosphate (DXP) to produce the thiazole phosphate moiety of thiamine. Sulfur is provided by the thiocarboxylate moiety of the carrier protein ThiS. In vitro, sulfur can be provided by H(2)S. In Rhizobium meliloti (strain 1021) (Ensifer meliloti), this protein is Thiazole synthase.